Reading from the N-terminus, the 189-residue chain is Elongation factor P (189 aa).

This sequence belongs to the elongation factor P family.

The protein localises to the cytoplasm. It functions in the pathway protein biosynthesis; polypeptide chain elongation. In terms of biological role, involved in peptide bond synthesis. Stimulates efficient translation and peptide-bond synthesis on native or reconstituted 70S ribosomes in vitro. Probably functions indirectly by altering the affinity of the ribosome for aminoacyl-tRNA, thus increasing their reactivity as acceptors for peptidyl transferase. The chain is Elongation factor P from Pseudomonas putida (strain ATCC 700007 / DSM 6899 / JCM 31910 / BCRC 17059 / LMG 24140 / F1).